Reading from the N-terminus, the 164-residue chain is Protein LIGHT-DEPENDENT SHORT HYPOCOTYLS 8 (164 aa).

Positions 23 to 150 (RYESQKSRDW…ARGVLYKKKK (128 aa)) constitute an ALOG domain. Positions 148-152 (KKKRL) match the Nuclear localization signal motif.

This sequence belongs to the plant homeotic and developmental regulators ALOG protein family.

It localises to the nucleus. In terms of biological role, probable transcription regulator that acts as a developmental regulator by promoting cell growth in response to light. The chain is Protein LIGHT-DEPENDENT SHORT HYPOCOTYLS 8 (LSH8) from Arabidopsis thaliana (Mouse-ear cress).